Here is a 203-residue protein sequence, read N- to C-terminus: Urease accessory protein UreG (203 aa).

10–17 (GPVGAGKT) contacts GTP.

This sequence belongs to the SIMIBI class G3E GTPase family. UreG subfamily. As to quaternary structure, homodimer. UreD, UreF and UreG form a complex that acts as a GTP-hydrolysis-dependent molecular chaperone, activating the urease apoprotein by helping to assemble the nickel containing metallocenter of UreC. The UreE protein probably delivers the nickel.

It is found in the cytoplasm. Functionally, facilitates the functional incorporation of the urease nickel metallocenter. This process requires GTP hydrolysis, probably effectuated by UreG. This is Urease accessory protein UreG from Lachnoclostridium phytofermentans (strain ATCC 700394 / DSM 18823 / ISDg) (Clostridium phytofermentans).